The chain runs to 397 residues: Putative F-box protein At2g04810 (397 aa).

In terms of domain architecture, F-box spans 20–68; it reads SDWSKLCPDVLRKIYETLRSPVDSHRAKIVCSNWYSVWKTCVKRPLCPL.

This Arabidopsis thaliana (Mouse-ear cress) protein is Putative F-box protein At2g04810.